The following is a 205-amino-acid chain: Large ribosomal subunit protein uL4 (205 aa).

The disordered stretch occupies residues 56–76 (VSGTTAKPYRQKHTGRARQGS).

This sequence belongs to the universal ribosomal protein uL4 family. As to quaternary structure, part of the 50S ribosomal subunit.

One of the primary rRNA binding proteins, this protein initially binds near the 5'-end of the 23S rRNA. It is important during the early stages of 50S assembly. It makes multiple contacts with different domains of the 23S rRNA in the assembled 50S subunit and ribosome. In terms of biological role, forms part of the polypeptide exit tunnel. The protein is Large ribosomal subunit protein uL4 of Ehrlichia ruminantium (strain Welgevonden).